Consider the following 429-residue polypeptide: Gamma-glutamyl phosphate reductase (429 aa).

The protein belongs to the gamma-glutamyl phosphate reductase family.

It is found in the cytoplasm. It carries out the reaction L-glutamate 5-semialdehyde + phosphate + NADP(+) = L-glutamyl 5-phosphate + NADPH + H(+). Its pathway is amino-acid biosynthesis; L-proline biosynthesis; L-glutamate 5-semialdehyde from L-glutamate: step 2/2. In terms of biological role, catalyzes the NADPH-dependent reduction of L-glutamate 5-phosphate into L-glutamate 5-semialdehyde and phosphate. The product spontaneously undergoes cyclization to form 1-pyrroline-5-carboxylate. The chain is Gamma-glutamyl phosphate reductase from Methylibium petroleiphilum (strain ATCC BAA-1232 / LMG 22953 / PM1).